Reading from the N-terminus, the 989-residue chain is ATP-dependent 6-phosphofructokinase subunit alpha (989 aa).

Residues 1–585 (MPEPSISALS…SYESFLSVSK (585 aa)) are N-terminal catalytic PFK domain 1. Residues Gly-220, 283 to 284 (RS), and 313 to 316 (GDGS) each bind ATP. Asp-314 serves as a coordination point for Mg(2+). Beta-D-fructose 6-phosphate-binding positions include 359 to 361 (SID), Arg-396, 403 to 405 (MGR), Glu-460, Arg-487, and 493 to 496 (HVQR). The active-site Proton acceptor is Asp-361. The interval 586–599 (YDDGSYLVPESSRL) is interdomain linker. The tract at residues 600–989 (NIAIIHVGAP…LSGRLSIRTT (390 aa)) is C-terminal regulatory PFK domain 2. Beta-D-fructose 2,6-bisphosphate is bound by residues Arg-670, 727–731 (TVSNN), Arg-765, 772–774 (QGG), Glu-832, Arg-858, 864–867 (HVQQ), and Arg-963.

This sequence belongs to the phosphofructokinase type A (PFKA) family. ATP-dependent PFK group I subfamily. Eukaryotic two domain clade 'E' sub-subfamily. As to quaternary structure, heterododecamer of 4 alpha, 4 beta and 4 gamma chains. The gamma chain bridges the N-terminal halves of the alpha and beta subunits. The cofactor is Mg(2+).

The protein resides in the cytoplasm. The enzyme catalyses beta-D-fructose 6-phosphate + ATP = beta-D-fructose 1,6-bisphosphate + ADP + H(+). Its pathway is carbohydrate degradation; glycolysis; D-glyceraldehyde 3-phosphate and glycerone phosphate from D-glucose: step 3/4. Its activity is regulated as follows. Allosterically activated by ADP, AMP, or fructose 2,6-bisphosphate, and allosterically inhibited by ATP or citrate. In terms of biological role, catalyzes the phosphorylation of D-fructose 6-phosphate to fructose 1,6-bisphosphate by ATP, the first committing step of glycolysis. Involved in the modulation of glucose-induced microautophagy of peroxisomes independent of its ability to metabolize glucose intermediates. The chain is ATP-dependent 6-phosphofructokinase subunit alpha (PFK1) from Komagataella phaffii (strain GS115 / ATCC 20864) (Yeast).